A 363-amino-acid polypeptide reads, in one-letter code: Probable auxin efflux carrier component 5a (363 aa).

10 helical membrane-spanning segments follow: residues V7–S27, C39–T59, V72–F92, S103–A123, L134–L154, F222–F242, V246–A266, L281–V301, V307–A327, and I342–I362.

This sequence belongs to the auxin efflux carrier (TC 2.A.69.1) family. In terms of tissue distribution, expressed in leaves, shoot apex and panicles. Expressed in roots, stem bases, stems, leaves and young panicles.

The protein resides in the membrane. May act as a component of the auxin efflux carrier. This chain is Probable auxin efflux carrier component 5a, found in Oryza sativa subsp. japonica (Rice).